The sequence spans 118 residues: Cell division protein FtsB (118 aa).

Topologically, residues 1–6 (MRNWRW) are cytoplasmic. Residues 7 to 24 (LLLVLAALLAWLQHRFWF) form a helical membrane-spanning segment. Topologically, residues 25–118 (GPGNSGEVRM…DLSQPRREKR (94 aa)) are periplasmic. Residues 30 to 66 (GEVRMLQVQIVQQHQENERLRQRNASLAAEVKNLKDG) are a coiled coil. The interval 98–118 (LPNDTSADHGVDLSQPRREKR) is disordered. Residues 103-118 (SADHGVDLSQPRREKR) are compositionally biased toward basic and acidic residues.

Belongs to the FtsB family. As to quaternary structure, part of a complex composed of FtsB, FtsL and FtsQ.

The protein localises to the cell inner membrane. Essential cell division protein. May link together the upstream cell division proteins, which are predominantly cytoplasmic, with the downstream cell division proteins, which are predominantly periplasmic. The polypeptide is Cell division protein FtsB (Xylella fastidiosa (strain M23)).